We begin with the raw amino-acid sequence, 611 residues long: tRNA uridine 5-carboxymethylaminomethyl modification enzyme MnmG (611 aa).

14-19 (GAGHAG) contributes to the FAD binding site. 274–288 (GPRYCPSIEDKIVKF) is an NAD(+) binding site.

Belongs to the MnmG family. In terms of assembly, homodimer. Heterotetramer of two MnmE and two MnmG subunits. FAD serves as cofactor.

Its subcellular location is the cytoplasm. Its function is as follows. NAD-binding protein involved in the addition of a carboxymethylaminomethyl (cmnm) group at the wobble position (U34) of certain tRNAs, forming tRNA-cmnm(5)s(2)U34. In Chlamydia caviae (strain ATCC VR-813 / DSM 19441 / 03DC25 / GPIC) (Chlamydophila caviae), this protein is tRNA uridine 5-carboxymethylaminomethyl modification enzyme MnmG.